Consider the following 317-residue polypeptide: Melanocyte-stimulating hormone receptor (317 aa).

Residues 1-37 (MPVQGSQRRLLGSLNSTPTATPHLGLAANQTGARCLE) lie on the Extracellular side of the membrane. Asn29 carries N-linked (GlcNAc...) asparagine glycosylation. Residues 38–63 (VSVPDGLFLSLGLVSLVENVLVVTAI) traverse the membrane as a helical segment. Over 64–72 (AKNRNLHSP) the chain is Cytoplasmic. A helical membrane pass occupies residues 73-93 (MYCFICCLALSDLLVSGSNML). Over 94–118 (ETAVTLLLEAGALAARAAVVQQLDN) the chain is Extracellular. The chain crosses the membrane as a helical span at residues 119-140 (VIDVITCSSMLSSLCFLGAIAV). Residues 141–163 (DRYISIFYALRYHSIVTLPRARR) lie on the Cytoplasmic side of the membrane. Residues 164–183 (AVAAIWVASVLFSTLFIAYY) traverse the membrane as a helical segment. Residues 184–191 (DHAAVLLC) are Extracellular-facing. Residues 192 to 211 (LVIFFLAMLVLMAVLYVHML) form a helical membrane-spanning segment. Residues 212–240 (ARACQHAQGIARLHKRQRLAHQGFGLKGA) are Cytoplasmic-facing. Residues 241-266 (ATLTILLGIFFLCWGPFFLHLTLIVL) traverse the membrane as a helical segment. Topologically, residues 267–279 (CPQHPTCSCIFKN) are extracellular. A helical membrane pass occupies residues 280 to 300 (FNLFLALIICNAIIDPLIYAF). The Cytoplasmic portion of the chain corresponds to 301–317 (RSQELRRTLKEVLLCSW). Residue Cys315 is the site of S-palmitoyl cysteine attachment.

Belongs to the G-protein coupled receptor 1 family. As to quaternary structure, interacts with MGRN1, but does not undergo MGRN1-mediated ubiquitination; this interaction competes with GNAS-binding and thus inhibits agonist-induced cAMP production. Interacts with OPN3; the interaction results in a decrease in MC1R-mediated cAMP signaling and ultimately a decrease in melanin production in melanocytes.

The protein localises to the cell membrane. In terms of biological role, receptor for MSH (alpha, beta and gamma) and ACTH. The activity of this receptor is mediated by G proteins which activate adenylate cyclase. Mediates melanogenesis, the production of eumelanin (black/brown) and phaeomelanin (red/yellow), via regulation of cAMP signaling in melanocytes. The chain is Melanocyte-stimulating hormone receptor (MC1R) from Papio hamadryas (Hamadryas baboon).